A 199-amino-acid chain; its full sequence is Hematopoietic prostaglandin D synthase (199 aa).

The GST N-terminal domain maps to 2-79; it reads PNYKLLYFNM…YLTKNTDLAG (78 aa). Glutathione is bound by residues Tyr-8, Arg-14, Trp-39, 49-51, and 63-64; these read GKI and QS. The GST C-terminal domain occupies 81–199; it reads TELEQCQVDA…WILKRPQTKL (119 aa).

The protein belongs to the GST superfamily. Sigma family. In terms of assembly, homodimer. Glutathione serves as cofactor. Highly expressed in spleen and bone marrow. Lower levels of expression in small intestine, colon, liver, pancreas and skin. Not detected in brain, heart, lung or kidney (at protein level).

The protein localises to the cytoplasm. The catalysed reaction is prostaglandin H2 = prostaglandin D2. It carries out the reaction RX + glutathione = an S-substituted glutathione + a halide anion + H(+). It catalyses the reaction 2-glyceryl-prostaglandin H2 = 2-glyceryl-prostaglandin D2. Bifunctional enzyme which catalyzes both the conversion of PGH2 to PGD2, a prostaglandin involved in smooth muscle contraction/relaxation and a potent inhibitor of platelet aggregation, and the conjugation of glutathione with a wide range of aryl halides and organic isothiocyanates. Also exhibits low glutathione-peroxidase activity towards cumene hydroperoxide. The chain is Hematopoietic prostaglandin D synthase from Rattus norvegicus (Rat).